Here is a 118-residue protein sequence, read N- to C-terminus: Turripeptide NCR-01 (118 aa).

The N-terminal stretch at 1–16 (MLRLILAVALVAACLA) is a signal peptide. The tract at residues 63–118 (QGFQGFLPQPHQKRDSYQHGGYQHQQSFDNFQGSGGMNNDNSDDSFALRNFNNDGY) is disordered. A compositionally biased stretch (polar residues) spans 85–102 (QHQQSFDNFQGSGGMNND).

As to expression, expressed by the venom duct.

It localises to the secreted. The chain is Turripeptide NCR-01 from Gemmula speciosa (Splendid gem-turris).